We begin with the raw amino-acid sequence, 98 residues long: NADH-ubiquinone oxidoreductase chain 4L (98 aa).

3 helical membrane-spanning segments follow: residues 1-21, 25-45, and 67-87; these read MSLV…GLLM, HLMS…ILST, and AACE…TYGV.

The protein belongs to the complex I subunit 4L family. As to quaternary structure, core subunit of respiratory chain NADH dehydrogenase (Complex I) which is composed of 45 different subunits.

The protein localises to the mitochondrion inner membrane. The enzyme catalyses a ubiquinone + NADH + 5 H(+)(in) = a ubiquinol + NAD(+) + 4 H(+)(out). Functionally, core subunit of the mitochondrial membrane respiratory chain NADH dehydrogenase (Complex I) which catalyzes electron transfer from NADH through the respiratory chain, using ubiquinone as an electron acceptor. Part of the enzyme membrane arm which is embedded in the lipid bilayer and involved in proton translocation. The sequence is that of NADH-ubiquinone oxidoreductase chain 4L (MT-ND4L) from Talpa europaea (European mole).